A 330-amino-acid chain; its full sequence is Ferredoxin--NADP reductase 2 (330 aa).

7 residues coordinate FAD: Glu37, Gln45, Tyr50, Val90, Phe124, Asp286, and Thr327.

This sequence belongs to the ferredoxin--NADP reductase type 2 family. In terms of assembly, homodimer. FAD is required as a cofactor.

The enzyme catalyses 2 reduced [2Fe-2S]-[ferredoxin] + NADP(+) + H(+) = 2 oxidized [2Fe-2S]-[ferredoxin] + NADPH. This is Ferredoxin--NADP reductase 2 from Shouchella clausii (strain KSM-K16) (Alkalihalobacillus clausii).